We begin with the raw amino-acid sequence, 288 residues long: Acetyl-coenzyme A carboxylase carboxyl transferase subunit beta (288 aa).

The region spanning 34 to 288 (LFAKCPACKH…HLVAFHGGVS (255 aa)) is the CoA carboxyltransferase N-terminal domain. Zn(2+) contacts are provided by Cys-38, Cys-41, Cys-56, and Cys-59. The C4-type zinc finger occupies 38–59 (CPACKHMIYQKDLGPAKICPTC).

This sequence belongs to the AccD/PCCB family. In terms of assembly, acetyl-CoA carboxylase is a heterohexamer composed of biotin carboxyl carrier protein (AccB), biotin carboxylase (AccC) and two subunits each of ACCase subunit alpha (AccA) and ACCase subunit beta (AccD). It depends on Zn(2+) as a cofactor.

Its subcellular location is the cytoplasm. The catalysed reaction is N(6)-carboxybiotinyl-L-lysyl-[protein] + acetyl-CoA = N(6)-biotinyl-L-lysyl-[protein] + malonyl-CoA. It functions in the pathway lipid metabolism; malonyl-CoA biosynthesis; malonyl-CoA from acetyl-CoA: step 1/1. Component of the acetyl coenzyme A carboxylase (ACC) complex. Biotin carboxylase (BC) catalyzes the carboxylation of biotin on its carrier protein (BCCP) and then the CO(2) group is transferred by the transcarboxylase to acetyl-CoA to form malonyl-CoA. The chain is Acetyl-coenzyme A carboxylase carboxyl transferase subunit beta from Streptococcus equi subsp. equi (strain 4047).